Consider the following 498-residue polypeptide: Glycerol kinase (498 aa).

Thr12 serves as a coordination point for ADP. The ATP site is built by Thr12, Thr13, and Ser14. Thr12 provides a ligand contact to sn-glycerol 3-phosphate. Arg16 serves as a coordination point for ADP. Arg82, Glu83, Tyr134, and Asp243 together coordinate sn-glycerol 3-phosphate. Glycerol contacts are provided by Arg82, Glu83, Tyr134, Asp243, and Gln244. ADP is bound by residues Thr265 and Gly308. Thr265, Gly308, Gln312, and Gly409 together coordinate ATP. Residues Gly409 and Asn413 each coordinate ADP.

It belongs to the FGGY kinase family. As to quaternary structure, homotetramer and homodimer (in equilibrium).

It carries out the reaction glycerol + ATP = sn-glycerol 3-phosphate + ADP + H(+). It participates in polyol metabolism; glycerol degradation via glycerol kinase pathway; sn-glycerol 3-phosphate from glycerol: step 1/1. With respect to regulation, activated by phosphorylation and inhibited by fructose 1,6-bisphosphate (FBP). Functionally, key enzyme in the regulation of glycerol uptake and metabolism. Catalyzes the phosphorylation of glycerol to yield sn-glycerol 3-phosphate. The sequence is that of Glycerol kinase from Clostridium botulinum (strain ATCC 19397 / Type A).